The primary structure comprises 610 residues: Propanediol dehydratase-reactivating factor large subunit (610 aa).

11-13 (NSS) lines the ATP pocket. Residues Thr105, Asp166, and Asp183 each contribute to the Mg(2+) site. ATP-binding positions include 459–462 (EEIK), 557–558 (GS), and Arg591.

This sequence belongs to the DdrA/PduG family. In terms of assembly, forms a heterotetramer PduG(2)/PduH(2). Mg(2+) is required as a cofactor.

It is found in the bacterial microcompartment. The enzyme catalyses ATP + H2O = ADP + phosphate + H(+). The protein operates within polyol metabolism; 1,2-propanediol degradation. Functionally, large subunit of the propanediol dehydratase-reactivating factor (DDR), which reactivates suicidally inhibited adenosylcobalamin-dependent propanediol dehydratase (diol dehydratase, DDH) found in the bacterial microcompartment (BMC) dedicated to 1,2-propanediol (1,2-PD) degradation. Reactivates inactivated DDH in the presence of ATP, Mg(2+) and free adenosylcobalamin (AdoCbl), by mediating the exchange of the tightly bound damaged cofactor AdoCbl for a free intact one. This subunit contains the adenosine nucleotide binding site. The 1,2-PD-specific bacterial microcompartment (BMC) concentrates low levels of 1,2-PD catabolic enzymes, concentrates volatile reaction intermediates thus enhancing pathway flux and keeps the level of toxic, mutagenic propionaldehyde low. In Salmonella typhimurium (strain LT2 / SGSC1412 / ATCC 700720), this protein is Propanediol dehydratase-reactivating factor large subunit.